Reading from the N-terminus, the 396-residue chain is S100P-binding protein (396 aa).

The segment at 145 to 249 (CDPVLDKDKI…RKNSGSHKSG (105 aa)) is disordered. 2 stretches are compositionally biased toward basic and acidic residues: residues 148-161 (VLDK…KETE) and 168-185 (EQTR…RCTE). Polar residues-rich tracts occupy residues 202–215 (SSPS…TASD) and 227–246 (VFSQ…SGSH).

As to quaternary structure, interacts with S100P.

Its subcellular location is the nucleus. The chain is S100P-binding protein from Mus musculus (Mouse).